Here is a 281-residue protein sequence, read N- to C-terminus: Acetyl-coenzyme A carboxylase carboxyl transferase subunit beta (281 aa).

Positions 24–281 constitute a CoA carboxyltransferase N-terminal domain; it reads GLWYKSPKGK…TKLLTMLANN (258 aa).

It belongs to the AccD/PCCB family. In terms of assembly, acetyl-CoA carboxylase is a heterohexamer composed of biotin carboxyl carrier protein (AccB), biotin carboxylase (AccC) and two subunits each of ACCase subunit alpha (AccA) and ACCase subunit beta (AccD).

Its subcellular location is the cytoplasm. It carries out the reaction N(6)-carboxybiotinyl-L-lysyl-[protein] + acetyl-CoA = N(6)-biotinyl-L-lysyl-[protein] + malonyl-CoA. It participates in lipid metabolism; malonyl-CoA biosynthesis; malonyl-CoA from acetyl-CoA: step 1/1. Component of the acetyl coenzyme A carboxylase (ACC) complex. Biotin carboxylase (BC) catalyzes the carboxylation of biotin on its carrier protein (BCCP) and then the CO(2) group is transferred by the transcarboxylase to acetyl-CoA to form malonyl-CoA. This chain is Acetyl-coenzyme A carboxylase carboxyl transferase subunit beta, found in Amoebophilus asiaticus (strain 5a2).